The following is a 473-amino-acid chain: ATP synthase subunit beta (473 aa).

158 to 165 (GGAGVGKT) provides a ligand contact to ATP.

Belongs to the ATPase alpha/beta chains family. F-type ATPases have 2 components, CF(1) - the catalytic core - and CF(0) - the membrane proton channel. CF(1) has five subunits: alpha(3), beta(3), gamma(1), delta(1), epsilon(1). CF(0) has three main subunits: a(1), b(2) and c(9-12). The alpha and beta chains form an alternating ring which encloses part of the gamma chain. CF(1) is attached to CF(0) by a central stalk formed by the gamma and epsilon chains, while a peripheral stalk is formed by the delta and b chains. The F(1)F(0) complex interacts with SpoIIIJ and YqjG; YqgA is found in the same complex.

Its subcellular location is the cell membrane. It localises to the membrane raft. The enzyme catalyses ATP + H2O + 4 H(+)(in) = ADP + phosphate + 5 H(+)(out). In terms of biological role, produces ATP from ADP in the presence of a proton gradient across the membrane. The catalytic sites are hosted primarily by the beta subunits. This chain is ATP synthase subunit beta, found in Bacillus subtilis (strain 168).